The primary structure comprises 1044 residues: MAAETLNFGPEWLRALSSGGSVASPPPSPAMPKYKLADYRYGREEMLALYVKENKVPEELQDKEFAAVLQEEPLQPLALEPLTEEEQRNFSLSVNSVAVLRLMGKGAGPPLPATSRGRGSTRSRGRGRGDSCFYQRSIEEGDGAFGRNPREIQRSQSWDDRGERRFEKPARRDGVRSGFEEGGAGPRKEHARSDSENWRSLREEQEDDGSWRLGAGPRRDGDRWRSTSPDGGPRSAGWREHGERRRKFDFDLRGERGGCGEEDGRVGGGNSHLRRCRGLDGFEDDKDGLPEWCLEDEDEEMGTFDASGAFLPLKKGPKEAIPEEQELDFRGLEEEEEEEEEPSEGVDEERPEAGGKEATPLPPPENSSSPSSLPALGPLWTTNEEGGEAVEKELPPAEGDELRGLSLSPRISSPPGPPGDLEDEEGLKHLQQEAEKLVASLQDSSLEEEQFTAAMQTQGLRHSTAATALPLSHGAARKWFYKDPQGEIQGPFTTQEMAEWFQAGYFSMSLLVKRGCDEGFQPLGEVIKMWGRVPFAPGPSPPPLLGNMDQERLKKQQELAAAALYQQLQHQHFLQLVGSRQLPQCTTLREKAAMGDLTPPQQQQLTTFLQQLQALKTPRGGDQNLLPTMSRSLSVPDSGPLWDLHTSASSQSGGEASLWDIPINSSTQGPILEQLQLQHKFQERREVELRAKREEEERKRREEKRRQQQQQQEEQKRRQEEEELFRRKQVRQQELLLKLLQQQQATNVPVPPAPSSPPPLWAGLAKQGLSMKTLLELQMESERQLHKQAAPREPLRAQAPNHRVQLGGLGSAPLNQWVSEAGPLWGGPDKSGGSSGGNLGLWEDTLKSGGSLARSLGLKSSRSSPSLSDSYSHLSGRPVRKKTEEEEKLLKLLQGIPRPQDGFTQWCEQMLHTLSTAGSLDVPMAVAILKEVESPYDVHDYIRSCLGDTLEAKEFAKQFLERRAKQKASQQRQQQQQQQQQQQQEAWLSSTSLQTAFQANHSTKLGPGEGSKAKRRALMLHSDPSILGYSLHGPSGEIESVDDY.

Phosphoserine occurs at positions 24, 28, 137, and 157. Disordered regions lie at residues Gly104–Pro290 and Ala306–Glu424. Basic and acidic residues-rich tracts occupy residues Asn148–Phe179 and Pro186–Glu203. Ser228 carries the phosphoserine modification. Composition is skewed to basic and acidic residues over residues Gly237–Arg265 and Gly316–Leu332. Residues Glu333–Arg350 show a composition bias toward acidic residues. Ser343 is subject to Phosphoserine. Positions Asn366 to Leu379 are enriched in low complexity. The span at Ala389–Arg403 shows a compositional bias: basic and acidic residues. A Phosphoserine modification is found at Ser408. Residues Ala476–Gly524 form the GYF domain. Phosphoserine is present on residues Ser540 and Ser634. Residues Lys692–Arg706 are compositionally biased toward basic and acidic residues. Disordered stretches follow at residues Lys692–Glu721, Glu820–Trp842, Ser855–Thr883, Gln966–Trp987, Asn1000–Met1019, and Pro1024–Tyr1044. The span at Asp829–Leu839 shows a compositional bias: gly residues. 2 stretches are compositionally biased toward low complexity: residues Ser855–Arg877 and Gln970–Gln984. Residue Ser863 is modified to Phosphoserine.

Belongs to the GIGYF family. As to quaternary structure, interacts with GRB10. This transient binding is increased under IGF1 stimulation and leads to recruitment of GIGYF1/GRB10 complex to IGF1 receptor. Interacts with DDX6. As to expression, ubiquitous. Lower expression in skeletal muscle, liver and testis.

In terms of biological role, may act cooperatively with GRB10 to regulate tyrosine kinase receptor signaling. May increase IGF1 receptor phosphorylation under IGF1 stimulation as well as phosphorylation of IRS1 and SHC1. This chain is GRB10-interacting GYF protein 1 (Gigyf1), found in Mus musculus (Mouse).